The chain runs to 386 residues: S-adenosylmethionine synthase (386 aa).

His-16 is a binding site for ATP. Asp-18 serves as a coordination point for Mg(2+). Glu-44 contributes to the K(+) binding site. The L-methionine site is built by Glu-57 and Gln-100. A flexible loop region spans residues 100 to 110; that stretch reads QSRDIAQGVDR. Residues 165–167, Asp-240, 246–247, Ala-263, and Lys-267 each bind ATP; these read DAK and RK. Asp-240 contributes to the L-methionine binding site. Lys-271 serves as a coordination point for L-methionine.

The protein belongs to the AdoMet synthase family. In terms of assembly, homotetramer; dimer of dimers. Mg(2+) is required as a cofactor. It depends on K(+) as a cofactor.

The protein resides in the cytoplasm. The catalysed reaction is L-methionine + ATP + H2O = S-adenosyl-L-methionine + phosphate + diphosphate. It participates in amino-acid biosynthesis; S-adenosyl-L-methionine biosynthesis; S-adenosyl-L-methionine from L-methionine: step 1/1. Functionally, catalyzes the formation of S-adenosylmethionine (AdoMet) from methionine and ATP. The overall synthetic reaction is composed of two sequential steps, AdoMet formation and the subsequent tripolyphosphate hydrolysis which occurs prior to release of AdoMet from the enzyme. The chain is S-adenosylmethionine synthase from Francisella tularensis subsp. holarctica (strain FTNF002-00 / FTA).